Reading from the N-terminus, the 841-residue chain is Neuronal tyrosine-phosphorylated phosphoinositide-3-kinase adapter 1 (841 aa).

5 disordered regions span residues 1–45, 64–448, 655–679, 745–769, and 812–833; these read MNLL…PGVR, PASQ…PAAL, RAWN…TSGI, RPCS…PLPP, and LPSW…RRQH. Over residues 8 to 25 the composition is skewed to basic and acidic residues; it reads TKLEWRQHKEEEAKRSSS. The span at 26 to 39 shows a compositional bias: low complexity; the sequence is KEVAPAGSAGPAAG. The segment at 76-186 is involved in CYFIP1- and NCKAP1-binding; it reads SAMAPRSLSC…DESCPPGPSP (111 aa). Residues 94 to 103 are compositionally biased toward gly residues; sequence VGGGPGGASG. Positions 114 to 123 are enriched in basic residues; that stretch reads PPAKPRRHPS. The span at 167–176 shows a compositional bias: polar residues; it reads SPNTQLSVSF. Positions 224 to 243 are enriched in gly residues; the sequence is FRGGGRSGGGLAGPPLGGGG. A compositionally biased stretch (acidic residues) spans 252-261; that stretch reads SDSEESEAIY. Over residues 279–295 the composition is skewed to pro residues; sequence GPPPLTATSPPQQPHAL. The span at 759-769 shows a compositional bias: pro residues; the sequence is PALPLPLPLPP.

This sequence belongs to the NYAP family. As to quaternary structure, interacts with ACOT9, ARHGAP26 and PIK3R2. Interacts with components of the WAVE1 complex, CYFIP1 and NCKAP1; this interaction mediates PI3K-WAVE1 association and actin cytoskeleton remodeling. Post-translationally, phosphorylated on tyrosine residues by FYN upon stimulation with CNTN5.

Functionally, activates PI3K and concomitantly recruits the WAVE1 complex to the close vicinity of PI3K and regulates neuronal morphogenesis. The protein is Neuronal tyrosine-phosphorylated phosphoinositide-3-kinase adapter 1 (NYAP1) of Homo sapiens (Human).